We begin with the raw amino-acid sequence, 273 residues long: Protein FAM210A (273 aa).

Residues 94–116 (RVLSSSSTSQETPSEKKEETDPL) form a disordered region. Positions 106–116 (PSEKKEETDPL) are enriched in basic and acidic residues. The DUF1279 domain occupies 118–230 (DKSISLYQRF…GYMSTPPPVK (113 aa)). Residues 138 to 158 (LIPVHLITSGIWFGTFYYATI) traverse the membrane as a helical segment. Residues 233 to 269 (LQGRMEETKELITEKMEETKDRLTEKLQETKGKVSFK) adopt a coiled-coil conformation.

The protein belongs to the FAM210 family. As to quaternary structure, interacts with ATAD3A. As to expression, expressed in skeletal muscle, heart, brain but not in bone.

It is found in the membrane. The protein localises to the mitochondrion. The protein resides in the cytoplasm. Functionally, may play a role in the structure and strength of both muscle and bone. This is Protein FAM210A (Fam210a) from Mus musculus (Mouse).